The following is a 313-amino-acid chain: Olfactory receptor 5H15 (313 aa).

At 1–28 (MEEENATLLTEFVLTGFLYQPQWKIPLF) the chain is on the extracellular side. Asn5 is a glycosylation site (N-linked (GlcNAc...) asparagine). Residues 29–49 (LAFLVIYLITIMGNLGLIAVI) form a helical membrane-spanning segment. Over 50-56 (WKDPHLH) the chain is Cytoplasmic. A helical transmembrane segment spans residues 57–77 (IPMYLLLGNLAFVDAWISSTV). Residues 78 to 98 (TPKMLNNFLAKSKMISLSECK) lie on the Extracellular side of the membrane. Cys97 and Cys179 are disulfide-bonded. Residues 99–119 (IQFFSIAIGVTTECFLLATMA) traverse the membrane as a helical segment. Over 120 to 143 (YDRYVAICKPLLYPAIMTNGLCIR) the chain is Cytoplasmic. Residues 144–164 (LLILSYIAGILHALIHEGFLF) form a helical membrane-spanning segment. Residues 165 to 195 (RLTFCNSNIVHHIYCDTIPLSKISCTDSSIN) are Extracellular-facing. Residues 196–216 (FLMVFIFSGSIQVFSIVTILI) form a helical membrane-spanning segment. Topologically, residues 217-240 (SYTFVLFTVLEKKSDKGVRKAFST) are cytoplasmic. Residues 241-261 (CGAHLFSVCLYYGPLLLMYVG) form a helical membrane-spanning segment. At 262-271 (PASPQADGQN) the chain is on the extracellular side. A helical transmembrane segment spans residues 272–292 (MVEPLFYTVIIPLLNPIIYSL). Residues 293-313 (RNKQVIVSFIKMLKRNVKVSY) lie on the Cytoplasmic side of the membrane.

It belongs to the G-protein coupled receptor 1 family.

The protein resides in the cell membrane. Functionally, odorant receptor. In Homo sapiens (Human), this protein is Olfactory receptor 5H15 (OR5H15).